Reading from the N-terminus, the 244-residue chain is UPF0280 protein Msp_1322 (244 aa).

It belongs to the UPF0280 family.

This is UPF0280 protein Msp_1322 from Methanosphaera stadtmanae (strain ATCC 43021 / DSM 3091 / JCM 11832 / MCB-3).